Consider the following 153-residue polypeptide: UPF0260 protein YcgN (153 aa).

Belongs to the UPF0260 family.

This chain is UPF0260 protein YcgN, found in Salmonella agona (strain SL483).